A 454-amino-acid chain; its full sequence is OTU domain-containing protein 1 (454 aa).

Disordered regions lie at residues 36-64 (QSAS…REAA) and 116-257 (LPPP…SRAD). Positions 52 to 64 (RPPAAATEPREAA) are enriched in low complexity. Residues 116–125 (LPPPSAPSPP) are compositionally biased toward pro residues. Basic and acidic residues-rich tracts occupy residues 151 to 164 (DAPD…EHRQ), 193 to 210 (GEER…RASG), and 219 to 229 (ALRRQDPEAEA). Residues 282–411 (KYRFHIIPDG…NGHYDAVFDH (130 aa)) enclose the OTU domain. The cys-loop stretch occupies residues 287 to 293 (IIPDGNC). The active site involves Asp290. Cys293 acts as the Nucleophile in catalysis. A his-loop region spans residues 342–352 (AAQDGAWAGYP). The interval 399 to 404 (WLSNGH) is variable-loop. Residue His404 is part of the active site. The 20-residue stretch at 430-449 (KRDEELAKSMAISLSKMYIE) folds into the UIM domain.

The enzyme catalyses Thiol-dependent hydrolysis of ester, thioester, amide, peptide and isopeptide bonds formed by the C-terminal Gly of ubiquitin (a 76-residue protein attached to proteins as an intracellular targeting signal).. Its function is as follows. Deubiquitinating enzyme that specifically hydrolyzes 'Lys-63'-linked polyubiquitin to monoubiquitin. Required for the stability and translation of a subset mRNAs with a high abundance of rare codons by mediating deubiquitination of 40S ribosomal protein RPS10/eS10, thereby antagonizing ZNF598-mediated 40S ubiquitination. The abundance of rare codons in mRNAs can limit the translation rate and can lead to ribosome collisions that trigger activation of ribosome quality control (RQC) pathway by ZNF598. OTUD1-mediated deubiquitination prevents activation of the RQC and subsequent dissociation of ribosomes and stimulates formation of polysomes and translation. This is OTU domain-containing protein 1 (Otud1) from Mus musculus (Mouse).